An 865-amino-acid chain; its full sequence is Protein translocase subunit SecA (865 aa).

ATP contacts are provided by residues Gln-93, 111-115 (GEGKT), and Asp-501. Zn(2+) contacts are provided by Cys-841, Cys-843, Cys-852, and Cys-853.

The protein belongs to the SecA family. In terms of assembly, monomer and homodimer. Part of the essential Sec protein translocation apparatus which comprises SecA, SecYEG and auxiliary proteins SecDF-YajC and YidC. The cofactor is Zn(2+).

The protein resides in the cell inner membrane. The protein localises to the cytoplasm. The catalysed reaction is ATP + H2O + cellular proteinSide 1 = ADP + phosphate + cellular proteinSide 2.. Part of the Sec protein translocase complex. Interacts with the SecYEG preprotein conducting channel. Has a central role in coupling the hydrolysis of ATP to the transfer of proteins into and across the cell membrane, serving as an ATP-driven molecular motor driving the stepwise translocation of polypeptide chains across the membrane. The polypeptide is Protein translocase subunit SecA (Helicobacter acinonychis (strain Sheeba)).